A 385-amino-acid polypeptide reads, in one-letter code: Probable protein phosphatase 2C 79 (385 aa).

Positions 1-18 (MLSLFFNFLTSCLWPSSS) are cleaved as a signal peptide. Positions 47-356 (DFSMAVVQAN…DDITVVVLFL (310 aa)) constitute a PPM-type phosphatase domain. A Phosphoserine modification is found at Ser-76. 4 residues coordinate Mn(2+): Asp-87, Gly-88, Asp-288, and Asp-347.

Belongs to the PP2C family. The cofactor is Mg(2+). Mn(2+) is required as a cofactor.

The catalysed reaction is O-phospho-L-seryl-[protein] + H2O = L-seryl-[protein] + phosphate. The enzyme catalyses O-phospho-L-threonyl-[protein] + H2O = L-threonyl-[protein] + phosphate. Functionally, may dephosphorylate and repress plasma membrane H(+)-ATPases (PM H(+)-ATPases, e.g. AHA1 and AHA2), thus influencing negatively plant growth and fitness. This Arabidopsis thaliana (Mouse-ear cress) protein is Probable protein phosphatase 2C 79.